A 548-amino-acid chain; its full sequence is ETS domain-containing transcription factor ERF (548 aa).

Residues T3 and T7 each carry the phosphothreonine modification. S20 and S24 each carry phosphoserine. Residues 27-107 (IQLWHFILEL…KGKRFTYKFN (81 aa)) constitute a DNA-binding region (ETS). 3 disordered regions span residues 130-169 (QSAP…SSSS), 184-225 (GSVS…LARL), and 280-304 (SPTL…SHFS). Phosphoserine occurs at positions 185 and 190. Over residues 289-301 (SGGGGPSGSGGGS) the composition is skewed to gly residues. Phosphoserine is present on S327. The disordered stretch occupies residues 342–478 (PQRPDKCPLP…GEAPGASQCM (137 aa)). Over residues 348–361 (CPLPPMAPETPPVP) the composition is skewed to pro residues. 2 stretches are compositionally biased toward low complexity: residues 362-373 (SSASSSSSSSSS) and 394-403 (KAVAGADKSG). 2 positions are modified to phosphoserine: S431 and S435. Acidic residues predominate over residues 431–451 (SEGESEEVEVTDISDEDEEDG). Position 441 is a phosphothreonine (T441). Phosphoserine is present on S444. Residues K465, K481, and K512 each participate in a glycyl lysine isopeptide (Lys-Gly) (interchain with G-Cter in SUMO2) cross-link. The disordered stretch occupies residues 492–548 (CRLEGGGGPAGGFEDEGEDKKVRGEGPGEAGGPLTPRRVSSDLQHATAQLSLEHRDS). T526 carries the post-translational modification Phosphothreonine; by MAPK1. 3 positions are modified to phosphoserine: S531, S532, and S548. A compositionally biased stretch (polar residues) spans 532–541 (SDLQHATAQL).

The protein belongs to the ETS family. Phosphorylated by multiple kinases including MAPK1/ERK2 at THR-526. Phosphorylation regulates the activity of ERF. As to expression, highest levels in testis, ovary, pancreas, and heart.

Its subcellular location is the nucleus. Functionally, potent transcriptional repressor that binds to the H1 element of the Ets2 promoter. May regulate other genes involved in cellular proliferation. Required for extraembryonic ectoderm differentiation, ectoplacental cone cavity closure, and chorioallantoic attachment. May be important for regulating trophoblast stem cell differentiation. The polypeptide is ETS domain-containing transcription factor ERF (ERF) (Homo sapiens (Human)).